Consider the following 585-residue polypeptide: MNLFTDFEARIKTALEQIDLVREKRSELDFGRIAVEPPRDASHGDVATNAAMVLAKPLGTNPRALADVIIAKLKEDADVADVSVAGPGFINIRLAVGYWQRLLASIIGAGIDYGRSSLGEGRTVNVEYVSANPTGPMHVGHCRGAVVGDALANLLAFAGYGVEKEYYINDAGSQIDVLARSVFLRYREALGERIGEIPSGLYPGDYLVPVGQSLAADYGVRLHNMPEEEWMPIVKDRTIDAMMAMIREDLAALNVHHDIFFSERTLHANGAAAIRTAINDLTFKGYVYKGTLPPPKGQLPEDWEDREQTLFRSTEVGDDIDRPLIKSDGSYTYFAADVAYFKNKFDRGFEEMIYVLGADHGGYVKRLEAVARGVSDGKAKLTVLLCQLVKLYRNGEPVKMSKRSGDFVTLRDVVEEVGRDSVRFMMLYRKNSEPLDFDFAKVTEQSKDNPVFYVQYAHARCMSVFRQAKEAFAGLDVSPEDLAKAVAGIEDPAELQLVAKLAEFPRIIESAAQSQEPHRIAFYLYDLASAFHAHWNKGKDQPELRFVNDKNRESTIARLGLVYAVASVLKSGLAITGTAAPDEMR.

Positions Ala131 to His141 match the 'HIGH' region motif.

The protein belongs to the class-I aminoacyl-tRNA synthetase family. As to quaternary structure, monomer.

It localises to the cytoplasm. It catalyses the reaction tRNA(Arg) + L-arginine + ATP = L-arginyl-tRNA(Arg) + AMP + diphosphate. The protein is Arginine--tRNA ligase of Rhizobium etli (strain ATCC 51251 / DSM 11541 / JCM 21823 / NBRC 15573 / CFN 42).